A 404-amino-acid polypeptide reads, in one-letter code: Ubiquitin-like modifier-activating enzyme 5 (404 aa).

ATP contacts are provided by glycine 83, aspartate 104, lysine 127, asparagine 150, and asparagine 184. Zn(2+) is bound by residues cysteine 226 and cysteine 229. Cysteine 250 (glycyl thioester intermediate) is an active-site residue. Positions 303 and 308 each coordinate Zn(2+). A disordered region spans residues 372–393 (APEKSSETSEETVTAATADETS). Low complexity predominate over residues 382 to 391 (ETVTAATADE).

It belongs to the ubiquitin-activating E1 family. UBA5 subfamily.

Functionally, E1-like enzyme which activates UFM1. This Drosophila simulans (Fruit fly) protein is Ubiquitin-like modifier-activating enzyme 5.